We begin with the raw amino-acid sequence, 256 residues long: Pimeloyl-[acyl-carrier protein] methyl ester esterase (256 aa).

Residues histidine 15–proline 242 form the AB hydrolase-1 domain. Substrate contacts are provided by residues tryptophan 22, serine 82 to leucine 83, and phenylalanine 143 to glutamine 147. Serine 82 acts as the Nucleophile in catalysis. Residues aspartate 207 and histidine 235 contribute to the active site. Histidine 235 provides a ligand contact to substrate.

This sequence belongs to the AB hydrolase superfamily. Carboxylesterase BioH family. In terms of assembly, monomer.

Its subcellular location is the cytoplasm. The enzyme catalyses 6-carboxyhexanoyl-[ACP] methyl ester + H2O = 6-carboxyhexanoyl-[ACP] + methanol + H(+). The protein operates within cofactor biosynthesis; biotin biosynthesis. In terms of biological role, the physiological role of BioH is to remove the methyl group introduced by BioC when the pimeloyl moiety is complete. It allows to synthesize pimeloyl-ACP via the fatty acid synthetic pathway through the hydrolysis of the ester bonds of pimeloyl-ACP esters. This chain is Pimeloyl-[acyl-carrier protein] methyl ester esterase, found in Salmonella newport (strain SL254).